Here is a 585-residue protein sequence, read N- to C-terminus: Butyrophilin subfamily 3 member A3 (585 aa).

The N-terminal stretch at 1 to 29 (MKMASSLACLLLNFHVSVFLVQLLTPCSA) is a signal peptide. Ig-like V-type domains lie at 30–139 (QFSV…KALV) and 145–236 (ALGS…ASIS). The Extracellular segment spans residues 30–248 (QFSVLGPSGP…DPFFTSAQPW (219 aa)). 2 disulfide bridges follow: C52/C126 and C166/C220. N115 carries an N-linked (GlcNAc...) asparagine glycan. A helical membrane pass occupies residues 249-269 (IAALAGTLPISLLLLAGASYF). Over 270–585 (LWRQQKEKIA…KPQACTEALY (316 aa)) the chain is Cytoplasmic. One can recognise a B30.2/SPRY domain in the interval 322-518 (RGEKSLAYHE…LTICPTPKEV (197 aa)). Residues 560–585 (AGAEGVSPSTTTSQNHKPQACTEALY) form a disordered region. The span at 566–576 (SPSTTTSQNHK) shows a compositional bias: polar residues.

Belongs to the immunoglobulin superfamily. BTN/MOG family.

It is found in the membrane. In Pongo abelii (Sumatran orangutan), this protein is Butyrophilin subfamily 3 member A3 (BTN3A3).